Reading from the N-terminus, the 337-residue chain is 2-oxoglutarate-Fe(II) type oxidoreductase (337 aa).

A Fe2OG dioxygenase domain is found at 179–282 (AIATLRYLHY…RYSIPFFFTG (104 aa)). Positions 205, 207, and 263 each coordinate Fe cation. Position 273 (arginine 273) interacts with 2-oxoglutarate.

It belongs to the iron/ascorbate-dependent oxidoreductase family. Fe(2+) serves as cofactor. In terms of tissue distribution, endocrocin is specifically produced in conidia.

Its pathway is secondary metabolite biosynthesis. Its function is as follows. 2-oxoglutarate-Fe(II) type oxidoreductase; part of the gene cluster that mediates the biosynthesis of endocrocin, a simple anthraquinone interesting for many biotechnological applications. The pathway begins with the synthesis of atrochrysone thioester by the polyketide synthase (PKS) encA. The atrochrysone carboxyl ACP thioesterase encB then breaks the thioester bond and releases the atrochrysone carboxylic acid from encA. The atrochrysone carboxylic acid is then converted to endocrocin anthrone which is further oxidized into endocrocin by encC. The exact function of encD has not been identified yet, but it negatively regulates endocrocin production, likely through the modification of endocrocin itself. The sequence is that of 2-oxoglutarate-Fe(II) type oxidoreductase from Aspergillus fumigatus (strain ATCC MYA-4609 / CBS 101355 / FGSC A1100 / Af293) (Neosartorya fumigata).